We begin with the raw amino-acid sequence, 741 residues long: Zinc finger protein 425 (741 aa).

Residues D1 to R69 enclose the KRAB domain. 2 disordered regions span residues T67 to K86 and R128 to R169. Positions F132 to A151 are enriched in polar residues. The span at D153 to G168 shows a compositional bias: basic and acidic residues. 19 C2H2-type zinc fingers span residues Y179–H201, F235–H257, Y263–H285, F291–H313, F319–H341, F347–H369, F375–H397, F403–H425, F431–H453, F459–H481, F487–H509, F515–H537, F543–H565, F571–H593, Y599–H621, F627–H649, F655–H677, F683–H705, and F711–H733.

This sequence belongs to the krueppel C2H2-type zinc-finger protein family.

The protein localises to the nucleus. It is found in the cytoplasm. Acts as a transcriptional repressor. The sequence is that of Zinc finger protein 425 (ZNF425) from Macaca fascicularis (Crab-eating macaque).